A 139-amino-acid polypeptide reads, in one-letter code: uncharacterized protein (139 aa).

Residues Ala8–Gln139 enclose the HTH marR-type domain. Positions Ile53–Gln76 form a DNA-binding region, H-T-H motif.

This is an uncharacterized protein from Bacillus subtilis (strain 168).